A 762-amino-acid polypeptide reads, in one-letter code: 5-methyltetrahydropteroyltriglutamate--homocysteine methyltransferase (762 aa).

5-methyltetrahydropteroyltri-L-glutamate-binding positions include Arg-17–Lys-20 and Lys-111. L-homocysteine is bound by residues Ile-435–Ser-437 and Glu-488. Residues Ile-435–Ser-437 and Glu-488 each bind L-methionine. 5-methyltetrahydropteroyltri-L-glutamate-binding positions include Arg-519–Cys-520 and Trp-565. Asp-603 is an L-homocysteine binding site. Asp-603 provides a ligand contact to L-methionine. Glu-609 is a 5-methyltetrahydropteroyltri-L-glutamate binding site. Residues His-645, Cys-647, and Glu-669 each contribute to the Zn(2+) site. His-698 acts as the Proton donor in catalysis. Position 730 (Cys-730) interacts with Zn(2+).

The protein belongs to the vitamin-B12 independent methionine synthase family. It depends on Zn(2+) as a cofactor.

The enzyme catalyses 5-methyltetrahydropteroyltri-L-glutamate + L-homocysteine = tetrahydropteroyltri-L-glutamate + L-methionine. It functions in the pathway amino-acid biosynthesis; L-methionine biosynthesis via de novo pathway; L-methionine from L-homocysteine (MetE route): step 1/1. Its function is as follows. Catalyzes the transfer of a methyl group from 5-methyltetrahydrofolate to homocysteine resulting in methionine formation. The sequence is that of 5-methyltetrahydropteroyltriglutamate--homocysteine methyltransferase from Bacillus cereus (strain ATCC 10987 / NRS 248).